A 219-amino-acid chain; its full sequence is MESNNVVLLDFSGSSFGMRLRIALALKGIKYEAKEENLSDKSPLLLEMNPVHKKIPILIHNGKPICESLNILEYIDEVWHEKCPLLPSDPYQRSQARFWANYIDNKIYSTGRRVWSGKGEDQEEAKKEFIEIFKTLEGELGNKTYFGGDNLGFVDVALVPFTSWFYSYETCANFSIEAECRKLVVWQNCMENERVSKSLPHPHKIYDFVLELKHKLGLA.

The 80-residue stretch at 4–83 (NNVVLLDFSG…YIDEVWHEKC (80 aa)) folds into the GST N-terminal domain. Residues serine 14, lysine 41, isoleucine 55, and 67-68 (ES) contribute to the glutathione site. The GST C-terminal domain occupies 89–208 (DPYQRSQARF…LPHPHKIYDF (120 aa)).

This sequence belongs to the GST superfamily. HSP26 family.

The catalysed reaction is RX + glutathione = an S-substituted glutathione + a halide anion + H(+). In terms of biological role, may play an important role in hormonal and growth regulatory responses. The protein is Probable glutathione S-transferase MSR-1 (MSR-1) of Nicotiana plumbaginifolia (Leadwort-leaved tobacco).